Consider the following 335-residue polypeptide: Tryptophan--tRNA ligase (335 aa).

Residues 11–13 and 19–20 each bind ATP; these read QPT and GN. The 'HIGH' region motif lies at 12–20; the sequence is PTGNLHLGN. An L-tryptophan-binding site is contributed by Asp-135. Residues 147–149, Val-189, and 198–202 each bind ATP; these read GED and KMSKS. A 'KMSKS' region motif is present at residues 198-202; it reads KMSKS.

The protein belongs to the class-I aminoacyl-tRNA synthetase family. In terms of assembly, homodimer.

The protein localises to the cytoplasm. It catalyses the reaction tRNA(Trp) + L-tryptophan + ATP = L-tryptophyl-tRNA(Trp) + AMP + diphosphate + H(+). Catalyzes the attachment of tryptophan to tRNA(Trp). This chain is Tryptophan--tRNA ligase, found in Nostoc sp. (strain PCC 7120 / SAG 25.82 / UTEX 2576).